Here is a 298-residue protein sequence, read N- to C-terminus: Putative glycylpeptide N-tetradecanoyltransferase (298 aa).

It belongs to the NMT family.

The catalysed reaction is N-terminal glycyl-[protein] + tetradecanoyl-CoA = N-tetradecanoylglycyl-[protein] + CoA + H(+). Functionally, adds a myristoyl group to the N-terminal glycine residue of certain proteins. The chain is Putative glycylpeptide N-tetradecanoyltransferase from Melanoplus sanguinipes (Migratory grasshopper).